The sequence spans 307 residues: D-alanine--D-alanine ligase (307 aa).

The region spanning 101–301 is the ATP-grasp domain; it reads KTVMRAAGVS…FGELVRWMVE (201 aa). An ATP-binding site is contributed by 127-182; the sequence is PLTPPYVVKPIAEGSSMGVIIVRDERSHPPQILASDEWVYGEEVLAETYVAGRELT. D251, E268, and N270 together coordinate Mg(2+).

The protein belongs to the D-alanine--D-alanine ligase family. Mg(2+) serves as cofactor. Requires Mn(2+) as cofactor.

It is found in the cytoplasm. It catalyses the reaction 2 D-alanine + ATP = D-alanyl-D-alanine + ADP + phosphate + H(+). It functions in the pathway cell wall biogenesis; peptidoglycan biosynthesis. Functionally, cell wall formation. The chain is D-alanine--D-alanine ligase from Methylorubrum extorquens (strain PA1) (Methylobacterium extorquens).